We begin with the raw amino-acid sequence, 116 residues long: Protein Wnt-5a (116 aa).

A lipid anchor (O-palmitoleoyl serine; by PORCN) is attached at serine 1. Residues asparagine 69 and asparagine 83 are each glycosylated (N-linked (GlcNAc...) asparagine). A disulfide bridge links cysteine 82 with cysteine 97.

Belongs to the Wnt family. Post-translationally, palmitoleoylation is required for efficient binding to frizzled receptors. Depalmitoleoylation leads to Wnt signaling pathway inhibition.

The protein localises to the secreted. The protein resides in the extracellular space. It localises to the extracellular matrix. Ligand for members of the frizzled family of seven transmembrane receptors. Can activate or inhibit canonical Wnt signaling, depending on receptor context. Required during embryogenesis for extension of the primary anterior-posterior axis. This Plestiodon skiltonianus (Western skink) protein is Protein Wnt-5a (WNT-5A).